The sequence spans 2283 residues: DNA polymerase epsilon catalytic subunit A (2283 aa).

Residues methionine 1 to leucine 32 are disordered. Positions arginine 9–glycine 24 are enriched in basic and acidic residues. A phosphoserine mark is found at serine 1184, serine 1296, and serine 1316. Disordered regions lie at residues glycine 1935–glutamate 1968 and histidine 2014–leucine 2041. Residues glutamine 1936 to glutamate 1946 are compositionally biased toward basic and acidic residues. Residues glutamate 1947–glutamate 1968 show a composition bias toward acidic residues. Residues serine 2028–alanine 2037 show a composition bias toward polar residues. Zn(2+) is bound by residues cysteine 2155, cysteine 2158, cysteine 2184, and cysteine 2187. Residues cysteine 2155–cysteine 2187 form a CysA-type zinc finger. Residues cysteine 2218, cysteine 2221, cysteine 2233, and cysteine 2235 each coordinate [4Fe-4S] cluster. Positions cysteine 2218 to cysteine 2235 match the CysB motif motif.

This sequence belongs to the DNA polymerase type-B family. Component of the DNA polymerase epsilon complex consisting of four subunits: the catalytic subunit POLE and the accessory subunits POLE2, POLE3 and POLE4. Interacts with RAD17 and TOPBP1. The cofactor is [4Fe-4S] cluster.

The protein resides in the nucleus. It carries out the reaction DNA(n) + a 2'-deoxyribonucleoside 5'-triphosphate = DNA(n+1) + diphosphate. In terms of biological role, catalytic component of the DNA polymerase epsilon complex. Participates in chromosomal DNA replication. Required during synthesis of the leading DNA strands at the replication fork and binds at/or near replication origins and moves along DNA with the replication fork. Has 3'-5' proofreading exonuclease activity that corrects errors arising during DNA replication. It is also involved in DNA synthesis during DNA repair. This is DNA polymerase epsilon catalytic subunit A (Pole) from Mus musculus (Mouse).